We begin with the raw amino-acid sequence, 318 residues long: MASHYEMFPAVVTRVEQLTPLIKRFTFKRQDGQNFPRFSGGSHIIVKMNEQLSNAYSLMSCTQDLSTYQVCVRKDVEGKGGSVFMHDQCNEGCEIQISEPKNLFPLAETGNKHILIAGGIGITPFLPQMDELAARGAEYELHYAYRSPEHAALLDELTQKHAGHVFSYVDSEGSMLNLDELISSQPKGTHVYVCGPKPMIDAVIDCCNKHRYRDEYIHWEQFASTVPEDGEAFTVVLAKSNQEIEVQSNQTILQAIETLNIDVECLCREGVCGTCETAILEGEAEHFDQYLSDAEKASQKSMMICVSRAKGKKLVLDL.

One can recognise an FAD-binding FR-type domain in the interval 5–107 (YEMFPAVVTR…SEPKNLFPLA (103 aa)). Positions 233–318 (FTVVLAKSNQ…AKGKKLVLDL (86 aa)) constitute a 2Fe-2S ferredoxin-type domain. [2Fe-2S] cluster contacts are provided by cysteine 267, cysteine 272, cysteine 275, and cysteine 305.

It belongs to the PDR/VanB family. CntB subfamily. Composed of an oxygenase subunit (cntA) and a reductase subunit (cntB). Requires FMN as cofactor. It depends on [2Fe-2S] cluster as a cofactor.

It carries out the reaction (R)-carnitine + NADH + O2 + H(+) = (3R)-3-hydroxy-4-oxobutanoate + trimethylamine + NAD(+) + H2O. The enzyme catalyses (R)-carnitine + NADPH + O2 + H(+) = (3R)-3-hydroxy-4-oxobutanoate + trimethylamine + NADP(+) + H2O. The protein operates within amine and polyamine metabolism; carnitine metabolism. Functionally, converts carnitine to trimethylamine and malic semialdehyde. The sequence is that of Carnitine monooxygenase reductase subunit from Acinetobacter baumannii (strain ATCC 19606 / DSM 30007 / JCM 6841 / CCUG 19606 / CIP 70.34 / NBRC 109757 / NCIMB 12457 / NCTC 12156 / 81).